Consider the following 70-residue polypeptide: MFKFINTLGKLVVKLYFIEAKKLDKKAKADSQRAIELAKQSREKSDAAVSGVHKSAAIAAKAQSMSKFFE.

This Escherichia coli (Bacteriophage T3) protein is Gene 4.3 protein (4.3).